The sequence spans 94 residues: Acylphosphatase (94 aa).

Residues 8–94 form the Acylphosphatase-like domain; that stretch reads TVHVIVKGKV…EKRYKHFAQL (87 aa). Residues Arg23 and Asn41 contribute to the active site.

The protein belongs to the acylphosphatase family.

The catalysed reaction is an acyl phosphate + H2O = a carboxylate + phosphate + H(+). The protein is Acylphosphatase (acyP) of Bordetella parapertussis (strain 12822 / ATCC BAA-587 / NCTC 13253).